Consider the following 539-residue polypeptide: Protein TIC 55, chloroplastic (539 aa).

A chloroplast-targeting transit peptide spans 1 to 50 (MAVPFLSSSLQLTPTSPILFTKVTPTPIIHNHRSTCTIPTKPRLRLLRRS). N-acetylalanine is present on Ala-51. Topologically, residues 51-482 (AVAGTAVSDQ…VIKSFELWKN (432 aa)) are stromal. Residues 88–193 (WYPLYLTKNV…VKDSQGVVWV (106 aa)) enclose the Rieske domain. 4 residues coordinate [2Fe-2S] cluster: Cys-129, His-131, Cys-148, and His-151. Fe cation is bound by residues His-242 and His-247. Residues 467-470 (CRSC) carry the Redox-active motif motif. Residues 483 to 500 (ILSATAVALTALAILVVS) form a helical membrane-spanning segment. Residues 501–504 (RQWK) are Chloroplast intermembrane-facing. The chain crosses the membrane as a helical span at residues 505 to 527 (AVLLGSAALCSAAAYTCLRAINL). Residues 528-539 (NTNNFIRTHRRL) are Stromal-facing.

Part of the Tic complex. Interacts with TIC62 and TIC110. Requires [2Fe-2S] cluster as cofactor. As to expression, highly expressed in green tissues and very low levels in non-photosynthetic tissues such as roots and etiolated seedlings.

The protein resides in the plastid. The protein localises to the chloroplast inner membrane. Functionally, involved in protein precursor import into chloroplasts. Part of the redox regulon consisting of TIC32, TIC 55 and TIC62. This chain is Protein TIC 55, chloroplastic (TIC55), found in Arabidopsis thaliana (Mouse-ear cress).